The primary structure comprises 270 residues: Thiazole synthase (270 aa).

The active-site Schiff-base intermediate with DXP is Lys-112. Residues Gly-173, 199–200 (AG), and 221–222 (NS) contribute to the 1-deoxy-D-xylulose 5-phosphate site.

Belongs to the ThiG family. As to quaternary structure, homotetramer. Forms heterodimers with either ThiH or ThiS.

It localises to the cytoplasm. It carries out the reaction [ThiS sulfur-carrier protein]-C-terminal-Gly-aminoethanethioate + 2-iminoacetate + 1-deoxy-D-xylulose 5-phosphate = [ThiS sulfur-carrier protein]-C-terminal Gly-Gly + 2-[(2R,5Z)-2-carboxy-4-methylthiazol-5(2H)-ylidene]ethyl phosphate + 2 H2O + H(+). The protein operates within cofactor biosynthesis; thiamine diphosphate biosynthesis. In terms of biological role, catalyzes the rearrangement of 1-deoxy-D-xylulose 5-phosphate (DXP) to produce the thiazole phosphate moiety of thiamine. Sulfur is provided by the thiocarboxylate moiety of the carrier protein ThiS. In vitro, sulfur can be provided by H(2)S. This is Thiazole synthase from Pseudomonas putida (strain ATCC 700007 / DSM 6899 / JCM 31910 / BCRC 17059 / LMG 24140 / F1).